Here is a 225-residue protein sequence, read N- to C-terminus: MGKPLLQIALDAQYLETALVDVKQIEHNIDIIEVGTILACSEGMRAVRILRALYPNQILVCDLKTTDAGATLAKMAFEAGADWLTVSAAAHPATKAACQKVAEEFNKIQPNLGVPKEIQIELYGNWNFDEVKNWLQLGIKQAIYHRSRDAELSGLSWSNQDIENIEKLDSLGIELSITGGITPDDLHLFKNTKNLKAFIAGRALVGKSGREIAEQLKQKIGQFWI.

Asp11 lines the substrate pocket. Mg(2+) contacts are provided by Glu33 and Asp62. Substrate is bound at residue Arg202.

The protein belongs to the HPS/KGPDC family. KGPDC subfamily. Homodimer. Mg(2+) serves as cofactor.

The catalysed reaction is 3-dehydro-L-gulonate 6-phosphate + H(+) = L-xylulose 5-phosphate + CO2. Its function is as follows. Catalyzes the decarboxylation of 3-keto-L-gulonate-6-P into L-xylulose-5-P. The chain is Probable 3-keto-L-gulonate-6-phosphate decarboxylase (sgbH) from Haemophilus influenzae (strain ATCC 51907 / DSM 11121 / KW20 / Rd).